Consider the following 268-residue polypeptide: Tryptophan synthase alpha chain (268 aa).

Residues Glu49 and Asp60 each act as proton acceptor in the active site.

The protein belongs to the TrpA family. As to quaternary structure, tetramer of two alpha and two beta chains.

The catalysed reaction is (1S,2R)-1-C-(indol-3-yl)glycerol 3-phosphate + L-serine = D-glyceraldehyde 3-phosphate + L-tryptophan + H2O. It functions in the pathway amino-acid biosynthesis; L-tryptophan biosynthesis; L-tryptophan from chorismate: step 5/5. Functionally, the alpha subunit is responsible for the aldol cleavage of indoleglycerol phosphate to indole and glyceraldehyde 3-phosphate. This is Tryptophan synthase alpha chain from Aliivibrio fischeri (strain ATCC 700601 / ES114) (Vibrio fischeri).